Here is a 74-residue protein sequence, read N- to C-terminus: O-conotoxin GeXXXIA (74 aa).

The first 22 residues, 1–22 (MKLTCVLIITVLFLTACQLTTA), serve as a signal peptide directing secretion. Positions 23–33 (VTYSRGEHKHR) are excised as a propeptide.

Belongs to the conotoxin O1 superfamily. In terms of assembly, homodimer; disulfide-linked. May contain 2 intrachain disulfide bonds and probably one interchain disulfide bond forming the homodimer. Post-translationally, the disulfide pairing is not important for activity towards the different nAChR subtypes, since this peptide without disulfide bond or with different disulfide bonds shows the same activity. As to expression, expressed by the venom duct.

It localises to the secreted. In terms of biological role, the activity of this natural homodimer has not been tested due to low abundance. The synthetic linear peptide has been refolded, giving 4 different monomeric isomers (m1 to m4) with 2 disulfide bonds each. All isomers potently inhibit rat alpha-1-beta-1-delta-epsilon/CHRNA1-CHRNB1-CHRND-CHRNE and human alpha-9-alpha-10/CHRNA9-CHRNA10 nicotinic acetylcholine receptors (nAChR). In addition, they show a modest inhibition at human alpha-3-beta-2/CHRNA3-CHRNB2, alpha-3-beta-4/CHRNA3-CHRNB4, alpha-7/CHRNA7, and alpha-4-beta-4/CHRNA4-CHRNB4. The synthetic monomer peptide without disulfide bonds shows a potent activity on alpha-9-alpha-10/CHRNA9 and CHRNA10 (IC(50)=16.2 nM). This linear peptide does not act as a competitive antagonist, or as a channel pore blocker of nAChR. In Conus generalis (General cone), this protein is O-conotoxin GeXXXIA.